A 135-amino-acid chain; its full sequence is Ribonuclease P protein component (135 aa).

Belongs to the RnpA family. As to quaternary structure, consists of a catalytic RNA component (M1 or rnpB) and a protein subunit.

It catalyses the reaction Endonucleolytic cleavage of RNA, removing 5'-extranucleotides from tRNA precursor.. RNaseP catalyzes the removal of the 5'-leader sequence from pre-tRNA to produce the mature 5'-terminus. It can also cleave other RNA substrates such as 4.5S RNA. The protein component plays an auxiliary but essential role in vivo by binding to the 5'-leader sequence and broadening the substrate specificity of the ribozyme. The protein is Ribonuclease P protein component of Pseudomonas paraeruginosa (strain DSM 24068 / PA7) (Pseudomonas aeruginosa (strain PA7)).